A 132-amino-acid chain; its full sequence is MVLVVKVDLSNIVLYIVAGCVVVSMLYSPFFSNDVKASSYAGAVFKGSGCIMDRNSFAQFGSCDIPKHVAESITKVATKEHDADIMVKRGEVTVRVVTLTETLFIILSRLFGLAVFLFMICLMSIVWFWCHR.

Over 1 to 11 (MVLVVKVDLSN) the chain is Cytoplasmic. The chain crosses the membrane as a helical span at residues 12–32 (IVLYIVAGCVVVSMLYSPFFS). At 33–109 (NDVKASSYAG…TETLFIILSR (77 aa)) the chain is on the lumenal side. The helical transmembrane segment at 110–130 (LFGLAVFLFMICLMSIVWFWC) threads the bilayer. The Cytoplasmic segment spans residues 131–132 (HR).

The protein belongs to the benyvirus TGB3 movement protein family. As to quaternary structure, interacts with movement proteins TGB1 and TGB2.

It localises to the host cell junction. The protein resides in the host plasmodesma. Its subcellular location is the host endoplasmic reticulum membrane. Its function is as follows. Participates in the transport of viral RNA to the plasmodesmata. TGBp3 most probably contains signals of plasmodesmata targeting is therefore involved in the targeting of TGBp2, and viral RNAs-TGBp1 (RNP complex), to plasmodesmata. Can gate plasmodesmata and increase their size exclusion limit. The polypeptide is Movement protein TGB3 (Beta macrocarpa (Beet)).